A 609-amino-acid polypeptide reads, in one-letter code: Pentatricopeptide repeat-containing protein At1g03540 (609 aa).

PPR repeat units lie at residues 25–59, 60–94, 95–126, 127–161, 162–196, 197–227, 228–263, 264–298, 299–329, 330–364, 396–426, 427–461, 462–497, and 498–532; these read SAPT…EIPA, TPKL…GLET, DRNV…RFVK, DAIS…GLDA, NEFT…GFEW, NHFI…MPEP, DVIC…GLVP, DGST…GIGS, NVVV…MSKK, NSVS…DLYC, NVIV…MSIR, NMIT…GIKP, DYIS…GIKP, and GTEH…NDAS. Residues 533–609 are type E motif; that stretch reads LWGVLLGPCA…TVGQSWIDAH (77 aa).

This sequence belongs to the PPR family. PCMP-E subfamily.

This is Pentatricopeptide repeat-containing protein At1g03540 (PCMP-E4) from Arabidopsis thaliana (Mouse-ear cress).